Consider the following 88-residue polypeptide: Small ribosomal subunit protein uS17 (88 aa).

The protein belongs to the universal ribosomal protein uS17 family. As to quaternary structure, part of the 30S ribosomal subunit.

In terms of biological role, one of the primary rRNA binding proteins, it binds specifically to the 5'-end of 16S ribosomal RNA. This is Small ribosomal subunit protein uS17 from Lawsonia intracellularis (strain PHE/MN1-00).